Here is a 304-residue protein sequence, read N- to C-terminus: Granaticin polyketide synthase bifunctional cyclase/dehydratase (304 aa).

It functions in the pathway antifungal biosynthesis; monensin biosynthesis. In terms of biological role, is needed for correct cyclization of the oligoketide leading to isochromanequinone formation. This chain is Granaticin polyketide synthase bifunctional cyclase/dehydratase, found in Streptomyces virginiae (Streptomyces cinnamonensis).